The sequence spans 154 residues: Small ribosomal subunit protein uS15 (154 aa).

The span at 1 to 10 (MARMHSRRRG) shows a compositional bias: basic residues. Residues 1–32 (MARMHSRRRGSSGSDRPTADEPPEWSEVDEDA) are disordered. The span at 21-32 (EPPEWSEVDEDA) shows a compositional bias: acidic residues.

It belongs to the universal ribosomal protein uS15 family. As to quaternary structure, part of the 30S ribosomal subunit.

In Natronomonas pharaonis (strain ATCC 35678 / DSM 2160 / CIP 103997 / JCM 8858 / NBRC 14720 / NCIMB 2260 / Gabara) (Halobacterium pharaonis), this protein is Small ribosomal subunit protein uS15.